Reading from the N-terminus, the 298-residue chain is Replication protein A 32 kDa subunit B (298 aa).

A DNA-binding region (OB) is located at residues 89–163; it reads VRLVGRMLNK…QVVAYSVRRI (75 aa).

This sequence belongs to the replication factor A protein 2 family. In terms of assembly, heterotrimer of RPA1, RPA2 and RPA3 (canonical replication protein A complex). Interacts with RPA1A and RPA3. In terms of processing, phosphorylated in a cell-cycle-dependent manner (from the S phase until mitosis). In response to DNA damage, recruited to DNA-repair nuclear foci, as a hypophosphorylated form.

The protein resides in the nucleus. Its function is as follows. Component of the replication protein A complex (RPA) required for DNA recombination, repair and replication. The activity of RPA is mediated by single-stranded DNA binding and protein interactions. The protein is Replication protein A 32 kDa subunit B (RPA2B) of Oryza sativa subsp. japonica (Rice).